Here is a 1124-residue protein sequence, read N- to C-terminus: Phytochrome type A (1124 aa).

Residues 1–19 (MSTTRPSQSSNNSGRSRNS) are compositionally biased toward low complexity. Residues 1 to 21 (MSTTRPSQSSNNSGRSRNSAR) form a disordered region. The GAF domain occupies 218–401 (SMERLCDTMV…VFAIHVNKEI (184 aa)). Cys-323 serves as a coordination point for phytochromobilin. PAS domains lie at 617–687 (VTSE…LQGE) and 750–821 (DYKA…VNFG). The region spanning 901-1120 (YMKRQIRNPL…ILSVELAAAH (220 aa)) is the Histidine kinase domain.

Belongs to the phytochrome family. In terms of assembly, homodimer. In terms of processing, contains one covalently linked phytochromobilin chromophore.

In terms of biological role, regulatory photoreceptor which exists in two forms that are reversibly interconvertible by light: the Pr form that absorbs maximally in the red region of the spectrum and the Pfr form that absorbs maximally in the far-red region. Photoconversion of Pr to Pfr induces an array of morphogenic responses, whereas reconversion of Pfr to Pr cancels the induction of those responses. Pfr controls the expression of a number of nuclear genes including those encoding the small subunit of ribulose-bisphosphate carboxylase, chlorophyll A/B binding protein, protochlorophyllide reductase, rRNA, etc. It also controls the expression of its own gene(s) in a negative feedback fashion. This chain is Phytochrome type A (PHYA), found in Lathyrus sativus (White vetchling).